The primary structure comprises 425 residues: Serine--tRNA ligase (425 aa).

229-231 is an L-serine binding site; the sequence is TAE. Residue 260–262 coordinates ATP; the sequence is RSE. L-serine is bound at residue Glu-283. 347–350 serves as a coordination point for ATP; it reads EISS. Residue Ser-384 coordinates L-serine.

This sequence belongs to the class-II aminoacyl-tRNA synthetase family. Type-1 seryl-tRNA synthetase subfamily. In terms of assembly, homodimer. The tRNA molecule binds across the dimer.

Its subcellular location is the cytoplasm. The enzyme catalyses tRNA(Ser) + L-serine + ATP = L-seryl-tRNA(Ser) + AMP + diphosphate + H(+). It catalyses the reaction tRNA(Sec) + L-serine + ATP = L-seryl-tRNA(Sec) + AMP + diphosphate + H(+). It functions in the pathway aminoacyl-tRNA biosynthesis; selenocysteinyl-tRNA(Sec) biosynthesis; L-seryl-tRNA(Sec) from L-serine and tRNA(Sec): step 1/1. In terms of biological role, catalyzes the attachment of serine to tRNA(Ser). Is also able to aminoacylate tRNA(Sec) with serine, to form the misacylated tRNA L-seryl-tRNA(Sec), which will be further converted into selenocysteinyl-tRNA(Sec). The chain is Serine--tRNA ligase from Rhizorhabdus wittichii (strain DSM 6014 / CCUG 31198 / JCM 15750 / NBRC 105917 / EY 4224 / RW1) (Sphingomonas wittichii).